The sequence spans 476 residues: tRNA(Ile)-lysidine synthase (476 aa).

An ATP-binding site is contributed by 30 to 35 (SGGPDS).

It belongs to the tRNA(Ile)-lysidine synthase family.

The protein localises to the cytoplasm. The enzyme catalyses cytidine(34) in tRNA(Ile2) + L-lysine + ATP = lysidine(34) in tRNA(Ile2) + AMP + diphosphate + H(+). In terms of biological role, ligates lysine onto the cytidine present at position 34 of the AUA codon-specific tRNA(Ile) that contains the anticodon CAU, in an ATP-dependent manner. Cytidine is converted to lysidine, thus changing the amino acid specificity of the tRNA from methionine to isoleucine. In Bacillus anthracis, this protein is tRNA(Ile)-lysidine synthase.